The sequence spans 336 residues: Ferrochelatase (336 aa).

The Fe cation site is built by His206 and Glu287.

It belongs to the ferrochelatase family.

Its subcellular location is the cytoplasm. It catalyses the reaction heme b + 2 H(+) = protoporphyrin IX + Fe(2+). Its pathway is porphyrin-containing compound metabolism; protoheme biosynthesis; protoheme from protoporphyrin-IX: step 1/1. Catalyzes the ferrous insertion into protoporphyrin IX. The polypeptide is Ferrochelatase (Neisseria meningitidis serogroup C / serotype 2a (strain ATCC 700532 / DSM 15464 / FAM18)).